We begin with the raw amino-acid sequence, 295 residues long: N-acetylmuramic acid 6-phosphate etherase (295 aa).

An SIS domain is found at 53-216; sequence TTEQFKQGGR…STITMVGVGK (164 aa). The Proton donor role is filled by E81. The active site involves E112.

Belongs to the GCKR-like family. MurNAc-6-P etherase subfamily. As to quaternary structure, homodimer.

It carries out the reaction N-acetyl-D-muramate 6-phosphate + H2O = N-acetyl-D-glucosamine 6-phosphate + (R)-lactate. It functions in the pathway amino-sugar metabolism; N-acetylmuramate degradation. Functionally, specifically catalyzes the cleavage of the D-lactyl ether substituent of MurNAc 6-phosphate, producing GlcNAc 6-phosphate and D-lactate. The polypeptide is N-acetylmuramic acid 6-phosphate etherase (Staphylococcus saprophyticus subsp. saprophyticus (strain ATCC 15305 / DSM 20229 / NCIMB 8711 / NCTC 7292 / S-41)).